The primary structure comprises 122 residues: Histone H2B, gonadal (122 aa).

The interval 1-31 (MPPKVSSKGAKKAGKAKAARSGDKKRKRRRK) is disordered. The span at 9–31 (GAKKAGKAKAARSGDKKRKRRRK) shows a compositional bias: basic residues. Residue Ser-109 is glycosylated (O-linked (GlcNAc) serine). Residue Lys-117 forms a Glycyl lysine isopeptide (Lys-Gly) (interchain with G-Cter in ubiquitin) linkage.

The protein belongs to the histone H2B family. The nucleosome is a histone octamer containing two molecules each of H2A, H2B, H3 and H4 assembled in one H3-H4 heterotetramer and two H2A-H2B heterodimers. The octamer wraps approximately 147 bp of DNA. Monoubiquitination of Lys-117 gives a specific tag for epigenetic transcriptional activation and is also prerequisite for histone H3 'Lys-4' and 'Lys-79' methylation. Post-translationally, glcNAcylation at Ser-109 promotes monoubiquitination of Lys-117. It fluctuates in response to extracellular glucose, and associates with transcribed genes.

Its subcellular location is the nucleus. It localises to the chromosome. In terms of biological role, core component of nucleosome. Nucleosomes wrap and compact DNA into chromatin, limiting DNA accessibility to the cellular machineries which require DNA as a template. Histones thereby play a central role in transcription regulation, DNA repair, DNA replication and chromosomal stability. DNA accessibility is regulated via a complex set of post-translational modifications of histones, also called histone code, and nucleosome remodeling. The chain is Histone H2B, gonadal from Patella granatina (Sandpaper limpet).